A 348-amino-acid polypeptide reads, in one-letter code: MTFSAVQSEIRPVQWNGHTCVLIDQTVLPGIYRTIEIRTSDQMATAIRTMIVRGAPAIGVAAAFGMVLGWQEAPQGDPITHLERVAATLRATRPTAVNLFWAIDRMLTVARRDPSFARLEREATAILEGDIATCRAIGEHGLLALPAAPERLRLLTHCNAGALATAGYGTALGVVRSAHRADRLERVYADETRPRLQGARLTAWELVHERIPVTVLADTMAAHVIGRGLVDAVVVGADRIAANGDTANKIGTCGVAIIARHYGVPFFVAAPWSTVDLNLSSGEQIPIEQRDSEEMRAIEGVALCPQGVEFYNPAFDVTPASLVTGIIVESGVYAPGELAAAGQVRLGR.

Substrate contacts are provided by residues 53–55 (RGA), arginine 93, and glutamine 197. Aspartate 238 serves as the catalytic Proton donor. Position 248-249 (248-249 (NK)) interacts with substrate.

This sequence belongs to the eIF-2B alpha/beta/delta subunits family. MtnA subfamily.

It catalyses the reaction 5-(methylsulfanyl)-alpha-D-ribose 1-phosphate = 5-(methylsulfanyl)-D-ribulose 1-phosphate. It functions in the pathway amino-acid biosynthesis; L-methionine biosynthesis via salvage pathway; L-methionine from S-methyl-5-thio-alpha-D-ribose 1-phosphate: step 1/6. Functionally, catalyzes the interconversion of methylthioribose-1-phosphate (MTR-1-P) into methylthioribulose-1-phosphate (MTRu-1-P). This Gloeobacter violaceus (strain ATCC 29082 / PCC 7421) protein is Methylthioribose-1-phosphate isomerase.